The sequence spans 186 residues: Large ribosomal subunit protein uL22 (186 aa).

Residues 159-186 (KATDEEPTKKKLSKKKLQRQKEKMMRSE) are disordered. Residues 177 to 186 (RQKEKMMRSE) are compositionally biased toward basic and acidic residues.

It belongs to the universal ribosomal protein uL22 family.

This chain is Large ribosomal subunit protein uL22 (RpL17), found in Phlebotomus papatasi (Sandfly).